The following is a 279-amino-acid chain: Movement protein (279 aa).

A disordered region spans residues 246 to 279; the sequence is SESEDLNVESPPAAIGSSSASRSEAFRPQVVNGL. Over residues 254 to 268 the composition is skewed to low complexity; the sequence is ESPPAAIGSSSASRS.

It belongs to the cucumovirus movement protein family.

The protein localises to the host cell junction. Its subcellular location is the host plasmodesma. Functionally, transports viral genome to neighboring plant cells directly through plasmosdesmata, without any budding. The movement protein allows efficient cell to cell propagation, by bypassing the host cell wall barrier. Acts by forming a tubular structure at the host plasmodesmata, enlarging it enough to allow free passage of virion capsids. This Cucurbita pepo (Vegetable marrow) protein is Movement protein.